Reading from the N-terminus, the 528-residue chain is Esterase PE16 (528 aa).

A PE domain is found at 1 to 93 (MSFVFAVPEM…AGWYVDAEAA (93 aa)). Positions 94–143 (NAALVDTAATGASELGSGGRTALILGSTGTPRPPFDYMQQVYDRYIAPHY) are linker. The PE-PPE domain maps to 149–369 (SGLYTPAQFQ…LRAIIELGYD (221 aa)). The active site involves Ser199. The helical transmembrane segment at 503 to 523 (IALLVFAAGIPAVAAVAILTG) threads the bilayer.

It belongs to the mycobacterial PE family.

It localises to the membrane. It carries out the reaction a hexanoate ester + H2O = an aliphatic alcohol + hexanoate + H(+). The enzyme catalyses an octanoate ester + H2O = an aliphatic alcohol + octanoate + H(+). The catalysed reaction is a butanoate ester + H2O = an aliphatic alcohol + butanoate + H(+). Esterase activity is significantly inhibited by the serine modifier phenylmethylsulfonyl fluoride (PMSF). Functionally, esterase that hydrolyzes short to medium chain fatty acid esters with the highest specific activity for p-nitrophenyl caproate (pNPC6). Has lower activity with p-nitrophenyl caprylate (pNPC8) and p-nitrophenyl butyrate (pNPC4). Has weak activity with p-nitrophenyl caprate (pNPC10) and p-nitrophenyl laurate (pNPC12). Does not possess lipolytic activity and cutinase activity. The protein is Esterase PE16 of Mycobacterium tuberculosis (strain ATCC 25618 / H37Rv).